A 238-amino-acid polypeptide reads, in one-letter code: UDP-2,3-diacylglucosamine hydrolase (238 aa).

Asp8, His10, Asp41, Asn78, and His113 together coordinate Mn(2+). 78 to 79 (NR) lines the substrate pocket. Residues Asp121, Ser159, Asn163, Lys166, and His194 each coordinate substrate. Positions 194 and 196 each coordinate Mn(2+).

Belongs to the LpxH family. The cofactor is Mn(2+).

Its subcellular location is the cell inner membrane. It catalyses the reaction UDP-2-N,3-O-bis[(3R)-3-hydroxytetradecanoyl]-alpha-D-glucosamine + H2O = 2-N,3-O-bis[(3R)-3-hydroxytetradecanoyl]-alpha-D-glucosaminyl 1-phosphate + UMP + 2 H(+). The protein operates within glycolipid biosynthesis; lipid IV(A) biosynthesis; lipid IV(A) from (3R)-3-hydroxytetradecanoyl-[acyl-carrier-protein] and UDP-N-acetyl-alpha-D-glucosamine: step 4/6. In terms of biological role, hydrolyzes the pyrophosphate bond of UDP-2,3-diacylglucosamine to yield 2,3-diacylglucosamine 1-phosphate (lipid X) and UMP by catalyzing the attack of water at the alpha-P atom. Involved in the biosynthesis of lipid A, a phosphorylated glycolipid that anchors the lipopolysaccharide to the outer membrane of the cell. The polypeptide is UDP-2,3-diacylglucosamine hydrolase (Shewanella pealeana (strain ATCC 700345 / ANG-SQ1)).